A 643-amino-acid chain; its full sequence is Protein ecdysoneless homolog (643 aa).

Disordered regions lie at residues 428–458 and 501–600; these read EFYN…NNFD and IESM…FTPV. Residues 446 to 456 are compositionally biased toward polar residues; sequence AGSSSDANMNN. Positions 528-543 are enriched in acidic residues; the sequence is MDFDDVEDDSEGEESN. Residues 564–580 are compositionally biased toward polar residues; the sequence is NSTLEKSFENVNQQHSS. Basic and acidic residues predominate over residues 581–592; that stretch reads KQNEESSKTRDE.

It belongs to the ECD family.

This Arabidopsis thaliana (Mouse-ear cress) protein is Protein ecdysoneless homolog.